The primary structure comprises 403 residues: MKTIDELLAEGVAGKRVFVRADLNVPLDGTTITDDGRIRAVVPTIAKLAEAGARVVVASHLGRPKGAPDPAFSLAPAATRLGELLGAEVAFAADTVGESARAAVAGLADGRVAVVENLRFNAGETSKDDAERGAFADQLAQLADVYVGDGFGAVHRKHASVFDLPARLPHYAGYLIATEVGVLKKLTTDVHRPYAVVLGGAKVSDKLGVIDHLLERADRILIGGGMAYTFLKAKGYEVGSSLLQEDQIPAVREYLRRAEEKGVEFVLPVDVVVAPSFPDLKTKAPAHPTTVAADAMPAGQMGLDNGPETNKLYASKLADAATVFWNGPMGVFEHPDFADGTRAVAQALVDSSAFSVVGGGDSAAAVRILGFDENAFGHISTGGGASLEYLEGKTLPGLAALED.

Residues 22–24 (DLN), R37, 60–63 (HLGR), R119, and R156 contribute to the substrate site. ATP is bound by residues K206, G302, E333, and 359 to 362 (GGDS).

Belongs to the phosphoglycerate kinase family. In terms of assembly, monomer.

Its subcellular location is the cytoplasm. The enzyme catalyses (2R)-3-phosphoglycerate + ATP = (2R)-3-phospho-glyceroyl phosphate + ADP. It functions in the pathway carbohydrate degradation; glycolysis; pyruvate from D-glyceraldehyde 3-phosphate: step 2/5. This Streptomyces griseus subsp. griseus (strain JCM 4626 / CBS 651.72 / NBRC 13350 / KCC S-0626 / ISP 5235) protein is Phosphoglycerate kinase.